Reading from the N-terminus, the 249-residue chain is Segregation and condensation protein A (249 aa).

Belongs to the ScpA family. As to quaternary structure, component of a cohesin-like complex composed of ScpA, ScpB and the Smc homodimer, in which ScpA and ScpB bind to the head domain of Smc. The presence of the three proteins is required for the association of the complex with DNA.

Its subcellular location is the cytoplasm. Participates in chromosomal partition during cell division. May act via the formation of a condensin-like complex containing Smc and ScpB that pull DNA away from mid-cell into both cell halves. In Listeria innocua serovar 6a (strain ATCC BAA-680 / CLIP 11262), this protein is Segregation and condensation protein A.